The following is a 278-amino-acid chain: Release factor glutamine methyltransferase (278 aa).

S-adenosyl-L-methionine contacts are provided by residues 117-121 (GTGSG), aspartate 140, and asparagine 184. Residue 184-187 (NPPY) participates in substrate binding.

Belongs to the protein N5-glutamine methyltransferase family. PrmC subfamily.

It carries out the reaction L-glutaminyl-[peptide chain release factor] + S-adenosyl-L-methionine = N(5)-methyl-L-glutaminyl-[peptide chain release factor] + S-adenosyl-L-homocysteine + H(+). Functionally, methylates the class 1 translation termination release factors RF1/PrfA and RF2/PrfB on the glutamine residue of the universally conserved GGQ motif. The chain is Release factor glutamine methyltransferase from Bacteroides thetaiotaomicron (strain ATCC 29148 / DSM 2079 / JCM 5827 / CCUG 10774 / NCTC 10582 / VPI-5482 / E50).